The primary structure comprises 494 residues: Casein kinase I homolog HRR25 (494 aa).

Residues 9 to 278 form the Protein kinase domain; sequence FRIGRKIGSG…LARLFKDLSI (270 aa). ATP-binding positions include 15–23 and K38; that span reads IGSGSFGDI. The active-site Proton acceptor is the D128. S143 is modified (phosphoserine). The tract at residues 394-494 is disordered; it reads RQQQPQQQVQ…DKPAGQSIWL (101 aa). 2 stretches are compositionally biased toward low complexity: residues 395-418 and 432-444; these read QQQPQQQVQSSQPQPQPQQLQQQP and QQQQRDSQEQQQQ. The segment covering 445–479 has biased composition (polar residues); the sequence is VPMATTRATQYPPQINSNNFNTNQASVPPQMRSNP.

It belongs to the protein kinase superfamily. CK1 Ser/Thr protein kinase family. Casein kinase I subfamily. Interacts with HRI1. Interacts with ELP1/IKI3; the interaction leads to ELP1/IKI3 phosphorylation.

It is found in the cytoplasm. The protein localises to the nucleus. It localises to the nucleolus. Its subcellular location is the nucleoplasm. It carries out the reaction L-seryl-[protein] + ATP = O-phospho-L-seryl-[protein] + ADP + H(+). The enzyme catalyses L-threonyl-[protein] + ATP = O-phospho-L-threonyl-[protein] + ADP + H(+). Its function is as follows. Protein kinase which phosphorylates serine and threonine residues. Can use casein as a substrate. Phosphorylates elongator complex member ELP1/IKI3 on 'Ser-1198' and 'Ser-1202' which promotes the tRNA modification function of the complex. Associated with repair of damaged DNA and meiosis. The sequence is that of Casein kinase I homolog HRR25 (HRR25) from Saccharomyces cerevisiae (strain ATCC 204508 / S288c) (Baker's yeast).